We begin with the raw amino-acid sequence, 427 residues long: 3-phosphoshikimate 1-carboxyvinyltransferase (427 aa).

3-phosphoshikimate-binding residues include Lys-22, Ser-23, and Arg-27. Lys-22 is a phosphoenolpyruvate binding site. Gly-96 and Arg-124 together coordinate phosphoenolpyruvate. Positions 169, 170, 171, 197, 313, 336, and 340 each coordinate 3-phosphoshikimate. Gln-171 contacts phosphoenolpyruvate. The active-site Proton acceptor is the Asp-313. Phosphoenolpyruvate contacts are provided by Arg-344, Arg-386, and Lys-411.

This sequence belongs to the EPSP synthase family. As to quaternary structure, monomer.

It is found in the cytoplasm. The enzyme catalyses 3-phosphoshikimate + phosphoenolpyruvate = 5-O-(1-carboxyvinyl)-3-phosphoshikimate + phosphate. It participates in metabolic intermediate biosynthesis; chorismate biosynthesis; chorismate from D-erythrose 4-phosphate and phosphoenolpyruvate: step 6/7. Functionally, catalyzes the transfer of the enolpyruvyl moiety of phosphoenolpyruvate (PEP) to the 5-hydroxyl of shikimate-3-phosphate (S3P) to produce enolpyruvyl shikimate-3-phosphate and inorganic phosphate. The protein is 3-phosphoshikimate 1-carboxyvinyltransferase of Salmonella agona (strain SL483).